The chain runs to 328 residues: Biotin synthase (328 aa).

A Radical SAM core domain is found at 41 to 260; the sequence is TAIETASLLS…VALARILMPA (220 aa). 3 residues coordinate [4Fe-4S] cluster: Cys-56, Cys-60, and Cys-63. The [2Fe-2S] cluster site is built by Cys-100, Cys-131, Cys-191, and Arg-264.

Belongs to the radical SAM superfamily. Biotin synthase family. As to quaternary structure, homodimer. [4Fe-4S] cluster serves as cofactor. It depends on [2Fe-2S] cluster as a cofactor.

The catalysed reaction is (4R,5S)-dethiobiotin + (sulfur carrier)-SH + 2 reduced [2Fe-2S]-[ferredoxin] + 2 S-adenosyl-L-methionine = (sulfur carrier)-H + biotin + 2 5'-deoxyadenosine + 2 L-methionine + 2 oxidized [2Fe-2S]-[ferredoxin]. Its pathway is cofactor biosynthesis; biotin biosynthesis; biotin from 7,8-diaminononanoate: step 2/2. Its function is as follows. Catalyzes the conversion of dethiobiotin (DTB) to biotin by the insertion of a sulfur atom into dethiobiotin via a radical-based mechanism. The sequence is that of Biotin synthase from Cereibacter sphaeroides (strain ATCC 17029 / ATH 2.4.9) (Rhodobacter sphaeroides).